The primary structure comprises 250 residues: Iron-sulfur assembly protein 1 (250 aa).

The tract at residues 54 to 89 (AADSVSPDSQRPGKKPFKFIVSNQSKSSKASKSPKW) is disordered. Positions 75–89 (SNQSKSSKASKSPKW) are enriched in low complexity. Fe cation-binding residues include cysteine 178, cysteine 242, and cysteine 244.

The protein belongs to the HesB/IscA family.

It localises to the mitochondrion matrix. Its function is as follows. Involved in the assembly of mitochondrial and cytoplasmic iron-sulfur proteins. Probably involved in the binding of an intermediate of Fe/S cluster assembly. This is Iron-sulfur assembly protein 1 (ISA1) from Saccharomyces cerevisiae (strain ATCC 204508 / S288c) (Baker's yeast).